The sequence spans 413 residues: Imidazolonepropionase (413 aa).

The Fe(3+) site is built by H77 and H79. Positions 77 and 79 each coordinate Zn(2+). Positions 86, 149, and 182 each coordinate 4-imidazolone-5-propanoate. Y149 serves as a coordination point for N-formimidoyl-L-glutamate. H247 is a Fe(3+) binding site. H247 contacts Zn(2+). Q250 contacts 4-imidazolone-5-propanoate. D322 contacts Fe(3+). Zn(2+) is bound at residue D322. Positions 324 and 326 each coordinate N-formimidoyl-L-glutamate. T327 lines the 4-imidazolone-5-propanoate pocket.

Belongs to the metallo-dependent hydrolases superfamily. HutI family. The cofactor is Zn(2+). Requires Fe(3+) as cofactor.

It is found in the cytoplasm. The enzyme catalyses 4-imidazolone-5-propanoate + H2O = N-formimidoyl-L-glutamate. It functions in the pathway amino-acid degradation; L-histidine degradation into L-glutamate; N-formimidoyl-L-glutamate from L-histidine: step 3/3. Catalyzes the hydrolytic cleavage of the carbon-nitrogen bond in imidazolone-5-propanoate to yield N-formimidoyl-L-glutamate. It is the third step in the universal histidine degradation pathway. The polypeptide is Imidazolonepropionase (Chromobacterium violaceum (strain ATCC 12472 / DSM 30191 / JCM 1249 / CCUG 213 / NBRC 12614 / NCIMB 9131 / NCTC 9757 / MK)).